A 311-amino-acid polypeptide reads, in one-letter code: Probable 5-dehydro-4-deoxyglucarate dehydratase (311 aa).

The protein belongs to the DapA family.

The enzyme catalyses 5-dehydro-4-deoxy-D-glucarate + H(+) = 2,5-dioxopentanoate + CO2 + H2O. The protein operates within carbohydrate acid metabolism; D-glucarate degradation; 2,5-dioxopentanoate from D-glucarate: step 2/2. The chain is Probable 5-dehydro-4-deoxyglucarate dehydratase from Ralstonia nicotianae (strain ATCC BAA-1114 / GMI1000) (Ralstonia solanacearum).